Reading from the N-terminus, the 76-residue chain is Large ribosomal subunit protein uL24 (76 aa).

Belongs to the universal ribosomal protein uL24 family. As to quaternary structure, part of the 50S ribosomal subunit.

Functionally, one of two assembly initiator proteins, it binds directly to the 5'-end of the 23S rRNA, where it nucleates assembly of the 50S subunit. One of the proteins that surrounds the polypeptide exit tunnel on the outside of the subunit. In Wolinella succinogenes (strain ATCC 29543 / DSM 1740 / CCUG 13145 / JCM 31913 / LMG 7466 / NCTC 11488 / FDC 602W) (Vibrio succinogenes), this protein is Large ribosomal subunit protein uL24.